Here is a 348-residue protein sequence, read N- to C-terminus: 11-beta-hydroxysteroid dehydrogenase A (348 aa).

Residues 10 to 30 traverse the membrane as a helical; Signal-anchor for type II membrane protein segment; it reads LIAPPFTFFFLLFFLPPFQIF. The Proline-knob motif lies at 13–26; that stretch reads PPFTFFFLLFFLPP. Residues 54–80, Asp105, and 132–135 contribute to the NADP(+) site; these read GASS…AARR and NAGI. Position 184 (Ser184) interacts with substrate. The Proton acceptor role is filled by Tyr197. NADP(+)-binding positions include 197–201 and Lys201; that span reads YNASK.

The protein belongs to the short-chain dehydrogenases/reductases (SDR) family. Expressed in seeds (at protein level). Not expressed in stem, leaf or root (at protein level).

Its subcellular location is the lipid droplet. It localises to the membrane. It carries out the reaction an 11beta-hydroxysteroid + NADP(+) = an 11-oxosteroid + NADPH + H(+). It catalyses the reaction an 11beta-hydroxysteroid + NAD(+) = an 11-oxosteroid + NADH + H(+). The catalysed reaction is corticosterone + NADP(+) = 11-dehydrocorticosterone + NADPH + H(+). The enzyme catalyses corticosterone + NAD(+) = 11-dehydrocorticosterone + NADH + H(+). It carries out the reaction 17beta-estradiol + NADP(+) = estrone + NADPH + H(+). It catalyses the reaction 17beta-estradiol + NAD(+) = estrone + NADH + H(+). Functionally, has dehydrogenase activity against corticosterone (11 beta-hydroxysteroid) and estradiol (17 beta-hydroxysteroid), with higher activity against estradiol. Possesses higher dehydrogenase activity with NADP(+) than NAD(+) regardless of the sterol substrate. May be involved in signal transduction regulated by various sterols. This Sesamum indicum (Oriental sesame) protein is 11-beta-hydroxysteroid dehydrogenase A.